The following is a 96-amino-acid chain: Fluoride-specific ion channel FluC 1 (96 aa).

2 helical membrane-spanning segments follow: residues 4–24 (LIQG…RLAL) and 26–46 (LWLG…AFLM). Residues glycine 61 and threonine 64 each coordinate Na(+). The chain crosses the membrane as a helical span at residues 69-89 (MMLNDVSFYFFTAVGCILAWL).

This sequence belongs to the fluoride channel Fluc/FEX (TC 1.A.43) family.

The protein localises to the cell membrane. The enzyme catalyses fluoride(in) = fluoride(out). Its activity is regulated as follows. Na(+) is not transported, but it plays an essential structural role and its presence is essential for fluoride channel function. In terms of biological role, fluoride-specific ion channel. Important for reducing fluoride concentration in the cell, thus reducing its toxicity. The chain is Fluoride-specific ion channel FluC 1 from Corynebacterium glutamicum (strain ATCC 13032 / DSM 20300 / JCM 1318 / BCRC 11384 / CCUG 27702 / LMG 3730 / NBRC 12168 / NCIMB 10025 / NRRL B-2784 / 534).